The sequence spans 360 residues: Phospho-N-acetylmuramoyl-pentapeptide-transferase (360 aa).

10 consecutive transmembrane segments (helical) span residues 19–39 (LTYL…LSIF), 73–93 (TMGG…WADL), 95–115 (SVYT…GWTD), 136–156 (YLSL…DTPI), 173–193 (GILF…AVNL), 199–219 (GLAI…AYLS), 233–253 (IAGA…GLGF), 263–283 (VFMG…VAVV), 288–308 (LAFA…MIQV), and 338–358 (VTIR…STLK).

Belongs to the glycosyltransferase 4 family. MraY subfamily. It depends on Mg(2+) as a cofactor.

Its subcellular location is the cell inner membrane. It carries out the reaction UDP-N-acetyl-alpha-D-muramoyl-L-alanyl-gamma-D-glutamyl-meso-2,6-diaminopimeloyl-D-alanyl-D-alanine + di-trans,octa-cis-undecaprenyl phosphate = di-trans,octa-cis-undecaprenyl diphospho-N-acetyl-alpha-D-muramoyl-L-alanyl-D-glutamyl-meso-2,6-diaminopimeloyl-D-alanyl-D-alanine + UMP. It functions in the pathway cell wall biogenesis; peptidoglycan biosynthesis. Its function is as follows. Catalyzes the initial step of the lipid cycle reactions in the biosynthesis of the cell wall peptidoglycan: transfers peptidoglycan precursor phospho-MurNAc-pentapeptide from UDP-MurNAc-pentapeptide onto the lipid carrier undecaprenyl phosphate, yielding undecaprenyl-pyrophosphoryl-MurNAc-pentapeptide, known as lipid I. The protein is Phospho-N-acetylmuramoyl-pentapeptide-transferase of Dichelobacter nodosus (strain VCS1703A).